The following is a 148-amino-acid chain: Snaclec stejaggregin-A subunit beta-2 (148 aa).

Residues 1–23 (MGQFIFVSFGLLVVLLSLSGAGA) form the signal peptide. An intrachain disulfide couples Cys27 to Cys38. Residues 34–145 (YDLYCYKVFK…CSRTHYVVCK (112 aa)) form the C-type lectin domain. 2 N-linked (GlcNAc...) asparagine glycosylation sites follow: Asn47 and Asn78. Disulfide bonds link Cys55–Cys144 and Cys121–Cys136.

This sequence belongs to the snaclec family. Heteromultimer; disulfide-linked. As to expression, expressed by the venom gland.

It is found in the secreted. In terms of biological role, interferes with one step of hemostasis (modulation of platelet aggregation, or coagulation cascade, for example). The polypeptide is Snaclec stejaggregin-A subunit beta-2 (Trimeresurus stejnegeri (Chinese green tree viper)).